Reading from the N-terminus, the 362-residue chain is E3 ubiquitin-protein ligase TM129 (362 aa).

At 1–6 the chain is on the lumenal side; sequence MDSPEV. Residues 7-27 form a helical membrane-spanning segment; that stretch reads TFTLAYLVFAVCFVFTPTEFH. Residues 28 to 56 lie on the Cytoplasmic side of the membrane; that stretch reads SAGLTVQNLLSGWLGSEDAAFVPYHLRRT. Residues 57-77 form a helical membrane-spanning segment; the sequence is AATLLCHSLLPLGYYVGMCFA. Topologically, residues 78-94 are lumenal; the sequence is ASEKQLYYPSQTPETWR. The chain crosses the membrane as a helical span at residues 95–115; that stretch reads AFLLLALMLPAIACTLIYYWS. Topologically, residues 116–362 are cytoplasmic; that stretch reads RDHWACHPLA…FCVLDVCAVR (247 aa). Residues 285–350 form an RING-type; degenerate zinc finger; it reads CIGCMQTQAS…ASRVPCPTCR (66 aa).

This sequence belongs to the TMEM129 family. Integral component of ER-resident dislocation complexes.

The protein localises to the endoplasmic reticulum membrane. The enzyme catalyses S-ubiquitinyl-[E2 ubiquitin-conjugating enzyme]-L-cysteine + [acceptor protein]-L-lysine = [E2 ubiquitin-conjugating enzyme]-L-cysteine + N(6)-ubiquitinyl-[acceptor protein]-L-lysine.. The protein operates within protein modification; protein ubiquitination. E3 ubiquitin-protein ligase involved in ER-associated protein degradation, preferentially associates with the E2 enzyme UBE2J2. Exploited by viral US11 proteins to mediate HLA class I proteins degradation. The chain is E3 ubiquitin-protein ligase TM129 (TMEM129) from Bos taurus (Bovine).